The primary structure comprises 32 residues: CRTEGMSCEENQQCCWRSCCRGECEAPCRFGP.

4 disulfide bridges follow: C1/C15, C8/C20, C14/C24, and C19/C28. Residues E9 and E10 each carry the 4-carboxyglutamate modification. P32 bears the Proline amide mark.

This sequence belongs to the conotoxin I2 superfamily. As to expression, expressed by the venom duct.

It is found in the secreted. Kappa-conotoxins bind and inhibit voltage-gated potassium channels. This toxin inhibits Kv1.2/KCNA2 and Kv1.6/KCNA6. Produces stiffening of body, limbs and tail when injected intracranially into mice. The sequence is that of Kappa-conotoxin SrXIA from Conus spurius (Alphabet cone).